A 1004-amino-acid polypeptide reads, in one-letter code: Protein Wnt-5 (1004 aa).

Residues 1–29 (MSCYRKRHFLLWLLRAVCMLHLTARGAYA) form the signal peptide. N-linked (GlcNAc...) asparagine glycans are attached at residues N60, N66, N115, and N219. The disordered stretch occupies residues 238-298 (QKDKAKTSGA…NPGEQPIGGY (61 aa)). Residues N307 and N341 are each glycosylated (N-linked (GlcNAc...) asparagine). Residues 310–407 (LLKPTDTDSH…ERDEWFRGQS (98 aa)) are disordered. Residues 389–403 (RREEQQRQRERDEWF) show a composition bias toward basic and acidic residues. N422 carries an N-linked (GlcNAc...) asparagine glycan. Positions 438–472 (KVSSEGSDGELLSRVERSQPSISSSSSSSSSSSRK) are disordered. A compositionally biased stretch (low complexity) spans 458–470 (SISSSSSSSSSSS). N-linked (GlcNAc...) asparagine glycosylation is found at N484, N485, N528, and N593. 3 cysteine pairs are disulfide-bonded: C583–C594, C633–C641, and C643–C661. The N-linked (GlcNAc...) asparagine glycan is linked to N724. The tract at residues 790 to 822 (FFKGEQQPRKKKRKNQRAAADAPAYPRNGIKES) is disordered. 8 disulfide bridges follow: C862–C876, C864–C871, C933–C964, C949–C959, C963–C1003, C979–C994, C981–C991, and C986–C987. Residue S868 is the site of O-palmitoleoyl serine; by PORCN attachment. N952 is a glycosylation site (N-linked (GlcNAc...) asparagine).

It belongs to the Wnt family. In terms of assembly, interacts with porcupine (por). In terms of processing, glycosylated, glycosylation is stimulated by porcupine at the ER. Post-translationally, palmitoleoylated by porcupine. The lipid group functions as a sorting signal, targeting the ligand to polarized vesicles that transport Wnt5 to unique sites at the cell surface. Depalmitoleoylated by notum, leading to inhibit Wnt signaling pathway. In terms of tissue distribution, dynamic expression pattern during embryogenesis. Expression is seen in the limb primordia of the head and thoracic segments, mesodermal and neurogenic regions.

Its subcellular location is the secreted. The protein resides in the extracellular space. The protein localises to the extracellular matrix. Its function is as follows. Binds as a ligand to a family of frizzled seven-transmembrane receptors and acts through a cascade of genes on the nucleus. Probable developmental protein. May be a signaling molecule which affects the development of discrete regions of tissues. Is likely to signal over only few cell diameters. May have a role in limb and CNS development; may be a downstream target of Dll that acts in the specification of these primordia. The polypeptide is Protein Wnt-5 (Wnt5) (Drosophila melanogaster (Fruit fly)).